A 94-amino-acid polypeptide reads, in one-letter code: Co-chaperonin GroES (94 aa).

It belongs to the GroES chaperonin family. In terms of assembly, heptamer of 7 subunits arranged in a ring. Interacts with the chaperonin GroEL.

It is found in the cytoplasm. Functionally, together with the chaperonin GroEL, plays an essential role in assisting protein folding. The GroEL-GroES system forms a nano-cage that allows encapsulation of the non-native substrate proteins and provides a physical environment optimized to promote and accelerate protein folding. GroES binds to the apical surface of the GroEL ring, thereby capping the opening of the GroEL channel. The sequence is that of Co-chaperonin GroES from Lactococcus lactis subsp. cremoris (strain MG1363).